Reading from the N-terminus, the 1074-residue chain is Transmembrane protein 132E (1074 aa).

An N-terminal signal peptide occupies residues 1-23; it reads MAPGMSGRRGAALLCLSVLLAHA. Residues 26–894 are Extracellular-facing; the sequence is RSHPASPSPP…LTDLEIGMYA (869 aa). Residues N70 and N91 are each glycosylated (N-linked (GlcNAc...) asparagine). 2 disordered regions span residues 205–224 and 243–266; these read PAAPPSARRKSPDGLEPEAA and GGCGSARRGPGPGPGAAARAESPT. Over residues 247 to 262 the composition is skewed to low complexity; it reads SARRGPGPGPGAAARA. 2 N-linked (GlcNAc...) asparagine glycosylation sites follow: N320 and N401. 2 disordered regions span residues 564 to 587 and 816 to 867; these read RRSARESEDEEEEEEERRQSANRG and GRDE…PVPP. Residues 843–854 show a composition bias toward low complexity; it reads GAGPPGTAIPAG. Residues 895 to 915 form a helical membrane-spanning segment; that stretch reads LLGVFCLAILVFLINCIVFVL. Topologically, residues 916–1074 are cytoplasmic; that stretch reads RYRHKRIPPE…NYMRRIKDIA (159 aa). The segment at 962–1064 is disordered; the sequence is VPACCHGDHH…TRPTPPPDLH (103 aa). Low complexity-rich tracts occupy residues 973–985 and 1016–1026; these read SGSSQTSVQSQVH and FTTFTTLPTEE. The segment covering 1035 to 1044 has biased composition (acidic residues); the sequence is GEEEDEEEDL.

It belongs to the TMEM132 family. Widely expressed, with highest levels in the cochlea. In the cochlea, detected in spiral ganglion, the organ of Corti and stria vascularis. In the organ of Corti, prominently expressed in the outer and inner hair cells, especially at the apical and basal region of the outer hair cell body (at protein level).

It localises to the membrane. Functionally, required for normal inner ear hair cell function and hearing. The sequence is that of Transmembrane protein 132E (Tmem132e) from Mus musculus (Mouse).